A 100-amino-acid polypeptide reads, in one-letter code: Large ribosomal subunit protein bL28 (100 aa).

The disordered stretch occupies residues 1-25 (MTRRCDITGKSVLSGNNVSHANNKS). Residues 11–22 (SVLSGNNVSHAN) are compositionally biased toward polar residues.

Belongs to the bacterial ribosomal protein bL28 family.

This Acidiphilium cryptum (strain JF-5) protein is Large ribosomal subunit protein bL28.